The chain runs to 1050 residues: Collagen alpha-2(I) chain (1050 aa).

Positions 1 to 1050 (SGGFDFSFLP…FGYEGDFYRA (1050 aa)) are disordered. Proline 10 and proline 13 each carry 4-hydroxyproline. A compositionally biased stretch (gly residues) spans 20–32 (RYYGVGLGPGPMG). Composition is skewed to low complexity over residues 33 to 46 (LMGPRGPPGASGAP) and 56 to 77 (EPGEPGQTGPAGARGPPGAPGK). A 4-hydroxyproline mark is found at proline 40 and proline 46. Residues 78–92 (AGEDGHPGKPGRPGE) are compositionally biased toward basic and acidic residues. Lysine 114 carries the post-translational modification 5-hydroxylysine; alternate. The O-linked (Gal...) hydroxylysine; alternate glycan is linked to lysine 114. Low complexity-rich tracts occupy residues 161 to 190 (VGAPGPAGARGSDGSVGPVGPAGPIGSAGP), 236 to 257 (PGANGLTGAKGAAGLPGVAGAP), 298 to 311 (EPGSAGPQGPPGSS), 320 to 338 (NGESGSTGPTGPPGLRGNP), and 355 to 371 (PAGARGASGPAGVRGPS). 2 positions are modified to 4-hydroxyproline: proline 377 and proline 380. 2 stretches are compositionally biased toward low complexity: residues 406–425 (LPGIDGRPGPIGPAGARGEA) and 452–467 (AGNRGAPGPDGNNGAQ). Residues 474-483 (GVQGGKGEQG) are compositionally biased toward gly residues. Composition is skewed to low complexity over residues 530–547 (PGESGAVGPSGAIGSRGP), 598–642 (VGTT…PRGS), and 649–669 (VGPAGPNGFAGPAGAAGQPGA). Residues 670 to 679 (KGERGTKGPK) are compositionally biased toward basic and acidic residues. Residues 687–697 (PTGPVGSAGPA) show a composition bias toward low complexity. Residues 707–716 (GSRGDGGPPG) are compositionally biased toward gly residues. The span at 718–727 (TGFPGAAGRT) shows a compositional bias: low complexity. Residues 764 to 773 (GETGAGGPPG) are compositionally biased toward gly residues. Low complexity-rich tracts occupy residues 781-808 (SGEPGTAGPPGTAGPQGLLGAPGILGLP), 816-841 (LPGVAGAVGEPGPLGIAGPPGARGPS), 881-903 (YAGNAGPVGAAGAPGPHGTVGPA), and 911-926 (EPGPVGSVGPVGALGP). The span at 936–947 (RGDKGEPGDKGP) shows a compositional bias: basic and acidic residues. Residues 1020 to 1032 (SGPPGPPGPPGPP) show a composition bias toward pro residues.

This sequence belongs to the fibrillar collagen family. Trimers of one alpha 2(I) and two alpha 1(I) chains. Interacts (via C-terminus) with TMEM131 (via PapD-L domain); the interaction is direct and is involved in assembly and TRAPPIII ER-to-Golgi transport complex-dependent secretion of collagen. Prolines at the third position of the tripeptide repeating unit (G-X-Y) are hydroxylated in some or all of the chains. In terms of tissue distribution, expressed in bones.

The protein localises to the secreted. The protein resides in the extracellular space. It localises to the extracellular matrix. Type I collagen is a member of group I collagen (fibrillar forming collagen). The chain is Collagen alpha-2(I) chain from Megatherium americanum (Giant ground sloth).